A 203-amino-acid polypeptide reads, in one-letter code: NADH-quinone oxidoreductase subunit C (203 aa).

The protein belongs to the complex I 30 kDa subunit family. In terms of assembly, NDH-1 is composed of 14 different subunits. Subunits NuoB, C, D, E, F, and G constitute the peripheral sector of the complex.

It localises to the cell inner membrane. The catalysed reaction is a quinone + NADH + 5 H(+)(in) = a quinol + NAD(+) + 4 H(+)(out). Functionally, NDH-1 shuttles electrons from NADH, via FMN and iron-sulfur (Fe-S) centers, to quinones in the respiratory chain. The immediate electron acceptor for the enzyme in this species is believed to be ubiquinone. Couples the redox reaction to proton translocation (for every two electrons transferred, four hydrogen ions are translocated across the cytoplasmic membrane), and thus conserves the redox energy in a proton gradient. This chain is NADH-quinone oxidoreductase subunit C, found in Methylibium petroleiphilum (strain ATCC BAA-1232 / LMG 22953 / PM1).